Consider the following 466-residue polypeptide: Asparagine--tRNA ligase (466 aa).

It belongs to the class-II aminoacyl-tRNA synthetase family. In terms of assembly, homodimer.

The protein localises to the cytoplasm. It catalyses the reaction tRNA(Asn) + L-asparagine + ATP = L-asparaginyl-tRNA(Asn) + AMP + diphosphate + H(+). In Shewanella baltica (strain OS155 / ATCC BAA-1091), this protein is Asparagine--tRNA ligase.